An 84-amino-acid polypeptide reads, in one-letter code: RNA-binding protein SAHV_0542 (84 aa).

The protein belongs to the eukaryotic ribosomal protein eL8 family.

The chain is RNA-binding protein SAHV_0542 from Staphylococcus aureus (strain Mu3 / ATCC 700698).